Consider the following 574-residue polypeptide: Probable inactive serine/threonine-protein kinase slob2 (574 aa).

Residues Tyr-6–Leu-26 traverse the membrane as a helical segment. One can recognise a Protein kinase domain in the interval Tyr-166–Arg-346. N-linked (GlcNAc...) asparagine glycosylation is present at Asn-358. The interval Ser-366–Lys-386 is disordered. N-linked (GlcNAc...) asparagine glycosylation is found at Asn-440, Asn-449, Asn-453, Asn-456, Asn-464, Asn-470, Asn-477, and Asn-483. A compositionally biased stretch (low complexity) spans Thr-450–Pro-493. The disordered stretch occupies residues Thr-450 to Ser-574. Positions Ile-494–Ala-539 are enriched in pro residues. Residues Leu-546 to Ser-556 show a composition bias toward low complexity.

Belongs to the protein kinase superfamily. Ser/Thr protein kinase family.

It is found in the membrane. The polypeptide is Probable inactive serine/threonine-protein kinase slob2 (slob2) (Dictyostelium discoideum (Social amoeba)).